The following is a 94-amino-acid chain: Pyrimidine/purine nucleoside phosphorylase (94 aa).

This sequence belongs to the nucleoside phosphorylase PpnP family.

The catalysed reaction is a purine D-ribonucleoside + phosphate = a purine nucleobase + alpha-D-ribose 1-phosphate. The enzyme catalyses adenosine + phosphate = alpha-D-ribose 1-phosphate + adenine. It catalyses the reaction cytidine + phosphate = cytosine + alpha-D-ribose 1-phosphate. It carries out the reaction guanosine + phosphate = alpha-D-ribose 1-phosphate + guanine. The catalysed reaction is inosine + phosphate = alpha-D-ribose 1-phosphate + hypoxanthine. The enzyme catalyses thymidine + phosphate = 2-deoxy-alpha-D-ribose 1-phosphate + thymine. It catalyses the reaction uridine + phosphate = alpha-D-ribose 1-phosphate + uracil. It carries out the reaction xanthosine + phosphate = alpha-D-ribose 1-phosphate + xanthine. Its function is as follows. Catalyzes the phosphorolysis of diverse nucleosides, yielding D-ribose 1-phosphate and the respective free bases. Can use uridine, adenosine, guanosine, cytidine, thymidine, inosine and xanthosine as substrates. Also catalyzes the reverse reactions. In Citrobacter koseri (strain ATCC BAA-895 / CDC 4225-83 / SGSC4696), this protein is Pyrimidine/purine nucleoside phosphorylase.